Consider the following 288-residue polypeptide: MTFQDIILTLQKYWAEKGCVLVQPYDMEVGAGTFHPETLLRSLGPEPWKTAYVQPSRRPTDGRYGENPNRLQHYYQFQVIIKPSPDDVQGLYLDSLKAIGIDPLAHDIRFVEDDWESPTLGAAGLGWEVWLDGMEITQFTYFQLAGSIELSPVTVELTYGLERIAMYLQEIDNVYELDWNGVVKYGDLHHMNEVEQSTYNFEVANVDMLLGFFDSYEAEAKACLEKELVLPAYEYCLKCSHTFNLLDARGAISVTERTGYIARIRNMARGCAEKYLEQRESMGFPLAK.

The protein belongs to the class-II aminoacyl-tRNA synthetase family. In terms of assembly, tetramer of two alpha and two beta subunits.

Its subcellular location is the cytoplasm. It catalyses the reaction tRNA(Gly) + glycine + ATP = glycyl-tRNA(Gly) + AMP + diphosphate. This Desulfatibacillum aliphaticivorans protein is Glycine--tRNA ligase alpha subunit.